The primary structure comprises 455 residues: GTPase Der (455 aa).

EngA-type G domains follow at residues 4 to 169 and 178 to 353; these read PVVA…PPKD and IQMA…EQHR. GTP-binding positions include 10 to 17, 57 to 61, 120 to 123, 184 to 191, 231 to 235, and 296 to 299; these read GRPNVGKS, DTGGL, NKCE, DTAGI, and NKWD. Positions 354–439 constitute a KH-like domain; sequence RRVSTSVVNE…PVKLYWRGKQ (86 aa).

This sequence belongs to the TRAFAC class TrmE-Era-EngA-EngB-Septin-like GTPase superfamily. EngA (Der) GTPase family. In terms of assembly, associates with the 50S ribosomal subunit.

Functionally, GTPase that plays an essential role in the late steps of ribosome biogenesis. This Parasynechococcus marenigrum (strain WH8102) protein is GTPase Der.